Reading from the N-terminus, the 577-residue chain is Arginine--tRNA ligase (577 aa).

The 'HIGH' region motif lies at 122-132 (PNVAKEMHVGH).

Belongs to the class-I aminoacyl-tRNA synthetase family. As to quaternary structure, monomer.

The protein localises to the cytoplasm. It catalyses the reaction tRNA(Arg) + L-arginine + ATP = L-arginyl-tRNA(Arg) + AMP + diphosphate. The sequence is that of Arginine--tRNA ligase from Escherichia coli O9:H4 (strain HS).